The primary structure comprises 408 residues: DNA primase DnaG (408 aa).

The region spanning 171–250 (DAIIIVEGRA…AYSPRGKSVE (80 aa)) is the Toprim domain. The Mg(2+) site is built by E177, D219, and D221. The tract at residues 276 to 323 (AEENVERLPPSAAPAEVRAPAGAGRTSEGERPPRREWDSKPPSTLGEH) is disordered. Positions 284-298 (PPSAAPAEVRAPAGA) are enriched in low complexity. Residues 302-314 (SEGERPPRREWDS) show a composition bias toward basic and acidic residues.

The protein belongs to the archaeal DnaG primase family. As to quaternary structure, forms a ternary complex with MCM helicase and DNA. It depends on Mg(2+) as a cofactor.

The catalysed reaction is ssDNA + n NTP = ssDNA/pppN(pN)n-1 hybrid + (n-1) diphosphate.. In terms of biological role, RNA polymerase that catalyzes the synthesis of short RNA molecules used as primers for DNA polymerase during DNA replication. The polypeptide is DNA primase DnaG (Methanoculleus marisnigri (strain ATCC 35101 / DSM 1498 / JR1)).